The following is a 398-amino-acid chain: Acetate kinase (398 aa).

Residue Asn-7 coordinates Mg(2+). Residue Lys-14 participates in ATP binding. Arg-91 contributes to the substrate binding site. Asp-148 serves as the catalytic Proton donor/acceptor. Residues His-208–Gly-212, Asp-283–Arg-285, and Gly-331–His-335 each bind ATP. Position 386 (Glu-386) interacts with Mg(2+).

It belongs to the acetokinase family. As to quaternary structure, homodimer. Mg(2+) is required as a cofactor. It depends on Mn(2+) as a cofactor.

The protein resides in the cytoplasm. It catalyses the reaction acetate + ATP = acetyl phosphate + ADP. It participates in metabolic intermediate biosynthesis; acetyl-CoA biosynthesis; acetyl-CoA from acetate: step 1/2. Catalyzes the formation of acetyl phosphate from acetate and ATP. Can also catalyze the reverse reaction. This Clostridium botulinum (strain Alaska E43 / Type E3) protein is Acetate kinase.